Consider the following 25-residue polypeptide: Ocellatin-K1 (25 aa).

Ile25 bears the Isoleucine amide mark.

In terms of tissue distribution, expressed by the skin glands.

The protein localises to the secreted. Functionally, has hemolytic and antibacterial activity. The polypeptide is Ocellatin-K1 (Leptodactylus knudseni (Knudsen's thin-toed frog)).